The primary structure comprises 534 residues: uncharacterized protein (534 aa).

Disordered regions lie at residues Met1–Pro150, Arg252–Pro284, and Trp383–Pro434. Basic and acidic residues predominate over residues Ser8 to Trp67. A compositionally biased stretch (polar residues) spans Ser102–Thr113. The segment covering Pro130–Ser141 has biased composition (pro residues). The segment covering Arg252–Arg262 has biased composition (basic and acidic residues). Positions Asn263–Ser272 are enriched in low complexity. Residues Asn393 to Phe408 show a composition bias toward polar residues.

This is an uncharacterized protein from Schizosaccharomyces pombe (strain 972 / ATCC 24843) (Fission yeast).